The chain runs to 167 residues: NADH-quinone oxidoreductase subunit E (167 aa).

[2Fe-2S] cluster is bound by residues cysteine 91, cysteine 96, cysteine 132, and cysteine 136.

The protein belongs to the complex I 24 kDa subunit family. [2Fe-2S] cluster is required as a cofactor.

It catalyses the reaction a quinone + NADH + 5 H(+)(in) = a quinol + NAD(+) + 4 H(+)(out). Functionally, NDH-1 shuttles electrons from NADH, via FMN and iron-sulfur (Fe-S) centers, to quinones in the respiratory chain. Couples the redox reaction to proton translocation (for every two electrons transferred, four hydrogen ions are translocated across the cytoplasmic membrane), and thus conserves the redox energy in a proton gradient. The sequence is that of NADH-quinone oxidoreductase subunit E (nuoE) from Rickettsia bellii (strain RML369-C).